We begin with the raw amino-acid sequence, 162 residues long: uncharacterized protein (162 aa).

An N-terminal signal peptide occupies residues 1-34 (MAREVISTSILMIATVVAVTAAIMVILPAVKDLA).

This is an uncharacterized protein from Archaeoglobus fulgidus (strain ATCC 49558 / DSM 4304 / JCM 9628 / NBRC 100126 / VC-16).